The chain runs to 188 residues: Photosystem I assembly protein Ycf4 (188 aa).

The next 2 helical transmembrane spans lie at 26–46 and 70–90; these read IWWG…GLSS and LLFY…TIIL.

The protein belongs to the Ycf4 family.

The protein resides in the cellular thylakoid membrane. Functionally, seems to be required for the assembly of the photosystem I complex. The polypeptide is Photosystem I assembly protein Ycf4 (Rippkaea orientalis (strain PCC 8801 / RF-1) (Cyanothece sp. (strain PCC 8801))).